We begin with the raw amino-acid sequence, 187 residues long: UPF0302 protein SERP1032 (187 aa).

It belongs to the UPF0302 family.

The polypeptide is UPF0302 protein SERP1032 (Staphylococcus epidermidis (strain ATCC 35984 / DSM 28319 / BCRC 17069 / CCUG 31568 / BM 3577 / RP62A)).